The sequence spans 358 residues: Alanine racemase (358 aa).

Lys35 functions as the Proton acceptor; specific for D-alanine in the catalytic mechanism. At Lys35 the chain carries N6-(pyridoxal phosphate)lysine. Arg130 lines the substrate pocket. The active-site Proton acceptor; specific for L-alanine is Tyr255. Met303 is a binding site for substrate.

Belongs to the alanine racemase family. Pyridoxal 5'-phosphate serves as cofactor.

The enzyme catalyses L-alanine = D-alanine. It functions in the pathway amino-acid biosynthesis; D-alanine biosynthesis; D-alanine from L-alanine: step 1/1. Its function is as follows. Catalyzes the interconversion of L-alanine and D-alanine. May also act on other amino acids. The chain is Alanine racemase (alr) from Shewanella sp. (strain MR-7).